Reading from the N-terminus, the 124-residue chain is Large ribosomal subunit protein uL18 (124 aa).

The protein belongs to the universal ribosomal protein uL18 family. As to quaternary structure, part of the 50S ribosomal subunit; part of the 5S rRNA/L5/L18/L25 subcomplex. Contacts the 5S and 23S rRNAs.

This is one of the proteins that bind and probably mediate the attachment of the 5S RNA into the large ribosomal subunit, where it forms part of the central protuberance. The polypeptide is Large ribosomal subunit protein uL18 (Aquifex pyrophilus).